A 432-amino-acid polypeptide reads, in one-letter code: Ornithine decarboxylase 1A, chloroplastic (432 aa).

An N6-(pyridoxal phosphate)lysine modification is found at K95. Residues S227, G265, and 298–301 (EPGR) contribute to the pyridoxal 5'-phosphate site. Residue 341 to 342 (YD) coordinates substrate. C377 acts as the Proton donor; shared with dimeric partner in catalysis. D378 provides a ligand contact to substrate. Y406 contacts pyridoxal 5'-phosphate.

Belongs to the Orn/Lys/Arg decarboxylase class-II family. In terms of assembly, homodimer. Only the dimer is catalytically active, as the active sites are constructed of residues from both monomers. Pyridoxal 5'-phosphate serves as cofactor.

It is found in the plastid. The protein resides in the chloroplast. It catalyses the reaction L-ornithine + H(+) = putrescine + CO2. Its pathway is alkaloid biosynthesis; nicotine biosynthesis. The protein operates within amine and polyamine biosynthesis; putrescine biosynthesis via L-ornithine pathway; putrescine from L-ornithine: step 1/1. Involved in the biosynthesis of pyridine alkaloid natural products, leading mainly to the production of anabasine, anatabine, nicotine and nornicotine, effective deterrents against herbivores with antiparasitic and pesticide properties (neurotoxins); nornicotine serves as the precursor in the synthesis of the carcinogen compound N'-nitrosonornicotine (NNN). Catalyzes the first and rate-limiting step of polyamine biosynthesis that converts ornithine into putrescine, which is the precursor for the polyamines, spermidine and spermine. Polyamines are essential for cell proliferation and are implicated in cellular processes, ranging from DNA replication to apoptosis. The sequence is that of Ornithine decarboxylase 1A, chloroplastic from Nicotiana tabacum (Common tobacco).